The primary structure comprises 61 residues: Small ribosomal subunit protein uS14 (61 aa).

Residues C24, C27, C40, and C43 each contribute to the Zn(2+) site.

This sequence belongs to the universal ribosomal protein uS14 family. Zinc-binding uS14 subfamily. In terms of assembly, part of the 30S ribosomal subunit. Contacts proteins S3 and S10. Zn(2+) serves as cofactor.

Binds 16S rRNA, required for the assembly of 30S particles and may also be responsible for determining the conformation of the 16S rRNA at the A site. The sequence is that of Small ribosomal subunit protein uS14 from Borrelia duttonii (strain Ly).